The sequence spans 572 residues: Phosphoenolpyruvate-protein phosphotransferase (572 aa).

His-190 serves as the catalytic Tele-phosphohistidine intermediate. Residues Arg-297 and Arg-333 each contribute to the phosphoenolpyruvate site. Glu-432 and Asp-456 together coordinate Mg(2+). Phosphoenolpyruvate is bound by residues 455–456 (ND) and Arg-466. Residue Cys-503 is the Proton donor of the active site.

The protein belongs to the PEP-utilizing enzyme family. Homodimer. The cofactor is Mg(2+).

The protein localises to the cytoplasm. The enzyme catalyses L-histidyl-[protein] + phosphoenolpyruvate = N(pros)-phospho-L-histidyl-[protein] + pyruvate. Functionally, general (non sugar-specific) component of the phosphoenolpyruvate-dependent sugar phosphotransferase system (sugar PTS). This major carbohydrate active-transport system catalyzes the phosphorylation of incoming sugar substrates concomitantly with their translocation across the cell membrane. Enzyme I transfers the phosphoryl group from phosphoenolpyruvate (PEP) to the phosphoryl carrier protein (HPr). This Listeria innocua serovar 6a (strain ATCC BAA-680 / CLIP 11262) protein is Phosphoenolpyruvate-protein phosphotransferase (ptsI).